Consider the following 319-residue polypeptide: Acetyl esterase (319 aa).

Positions 91–93 (HGG) match the Involved in the stabilization of the negatively charged intermediate by the formation of the oxyanion hole motif. Catalysis depends on residues S165, D262, and H292.

The protein belongs to the 'GDXG' lipolytic enzyme family. In terms of assembly, homodimer. Interacts with MalT and MelA.

Its subcellular location is the cytoplasm. Its function is as follows. Displays esterase activity towards short chain fatty esters (acyl chain length of up to 8 carbons). Able to hydrolyze triacetylglycerol (triacetin) and tributyrylglycerol (tributyrin), but not trioleylglycerol (triolein) or cholesterol oleate. Negatively regulates MalT activity by antagonizing maltotriose binding. Inhibits MelA galactosidase activity. This chain is Acetyl esterase, found in Escherichia coli O139:H28 (strain E24377A / ETEC).